A 267-amino-acid chain; its full sequence is GTP cyclohydrolase MptA (267 aa).

It belongs to the GTP cyclohydrolase IV family. Homodimer. Fe(2+) serves as cofactor.

It catalyses the reaction GTP + H2O = 7,8-dihydroneopterin 2',3'-cyclic phosphate + formate + diphosphate + H(+). Its pathway is cofactor biosynthesis; 5,6,7,8-tetrahydromethanopterin biosynthesis. Converts GTP to 7,8-dihydro-D-neopterin 2',3'-cyclic phosphate, the first intermediate in the biosynthesis of coenzyme methanopterin. The polypeptide is GTP cyclohydrolase MptA (Pyrococcus furiosus (strain ATCC 43587 / DSM 3638 / JCM 8422 / Vc1)).